A 163-amino-acid polypeptide reads, in one-letter code: 3-hydroxyacyl-[acyl-carrier-protein] dehydratase FabZ (163 aa).

Residue H61 is part of the active site.

It belongs to the thioester dehydratase family. FabZ subfamily.

It is found in the cytoplasm. It carries out the reaction a (3R)-hydroxyacyl-[ACP] = a (2E)-enoyl-[ACP] + H2O. Functionally, involved in unsaturated fatty acids biosynthesis. Catalyzes the dehydration of short chain beta-hydroxyacyl-ACPs and long chain saturated and unsaturated beta-hydroxyacyl-ACPs. This chain is 3-hydroxyacyl-[acyl-carrier-protein] dehydratase FabZ, found in Dinoroseobacter shibae (strain DSM 16493 / NCIMB 14021 / DFL 12).